A 1247-amino-acid chain; its full sequence is Clustered mitochondria protein homolog (1247 aa).

Positions M1–D43 are disordered. Positions G30 to S39 are enriched in polar residues. One can recognise a Clu domain in the interval S329–L579. The disordered stretch occupies residues G1222 to D1247.

The protein belongs to the CLU family.

Its subcellular location is the cytoplasm. MRNA-binding protein involved in proper cytoplasmic distribution of mitochondria. This Caenorhabditis elegans protein is Clustered mitochondria protein homolog.